A 293-amino-acid chain; its full sequence is Ethanolamine ammonia-lyase small subunit (293 aa).

Residues V207 and E228 each coordinate adenosylcob(III)alamin.

This sequence belongs to the EutC family. In terms of assembly, the basic unit is a heterodimer which dimerizes to form tetramers. The heterotetramers trimerize; 6 large subunits form a core ring with 6 small subunits projecting outwards. The cofactor is adenosylcob(III)alamin.

The protein resides in the bacterial microcompartment. The enzyme catalyses ethanolamine = acetaldehyde + NH4(+). Its pathway is amine and polyamine degradation; ethanolamine degradation. In terms of biological role, catalyzes the deamination of various vicinal amino-alcohols to oxo compounds. Allows this organism to utilize ethanolamine as the sole source of nitrogen and carbon in the presence of external vitamin B12. In Clostridioides difficile (strain 630) (Peptoclostridium difficile), this protein is Ethanolamine ammonia-lyase small subunit.